Consider the following 129-residue polypeptide: uncharacterized protein (129 aa).

A helical transmembrane segment spans residues 8-24; that stretch reads YLILFITIIAICSLFRI.

It is found in the membrane. This is an uncharacterized protein from Rickettsia prowazekii (strain Madrid E).